A 57-amino-acid chain; its full sequence is Large ribosomal subunit protein bL32 (57 aa).

The protein belongs to the bacterial ribosomal protein bL32 family.

In Halalkalibacterium halodurans (strain ATCC BAA-125 / DSM 18197 / FERM 7344 / JCM 9153 / C-125) (Bacillus halodurans), this protein is Large ribosomal subunit protein bL32 (rpmF).